A 211-amino-acid polypeptide reads, in one-letter code: Putative transposase for insertion sequence element IS402 (211 aa).

The tract at residues arginine 51–lysine 71 is disordered.

The protein belongs to the transposase 11 family.

Functionally, involved in the transposition of the insertion sequence. The chain is Putative transposase for insertion sequence element IS402 from Burkholderia cepacia (Pseudomonas cepacia).